The primary structure comprises 285 residues: Hydroxyethylthiazole kinase (285 aa).

Methionine 43 contributes to the substrate binding site. ATP contacts are provided by lysine 119 and serine 172. A substrate-binding site is contributed by glycine 199.

Belongs to the Thz kinase family. The cofactor is Mg(2+).

It catalyses the reaction 5-(2-hydroxyethyl)-4-methylthiazole + ATP = 4-methyl-5-(2-phosphooxyethyl)-thiazole + ADP + H(+). It functions in the pathway cofactor biosynthesis; thiamine diphosphate biosynthesis; 4-methyl-5-(2-phosphoethyl)-thiazole from 5-(2-hydroxyethyl)-4-methylthiazole: step 1/1. Its function is as follows. Catalyzes the phosphorylation of the hydroxyl group of 4-methyl-5-beta-hydroxyethylthiazole (THZ). This Desulfovibrio desulfuricans (strain ATCC 27774 / DSM 6949 / MB) protein is Hydroxyethylthiazole kinase.